The chain runs to 30 residues: Dermaseptin-S3 (30 aa).

The protein belongs to the frog skin active peptide (FSAP) family. Dermaseptin subfamily. As to quaternary structure, monomer and oligomer. Forms aggregates in aqueous environments. In terms of tissue distribution, expressed by the skin glands.

The protein localises to the secreted. Potent antimicrobial peptide with activity against bacteria and protozoa. Also has activity against fungi. Probably acts by disturbing membrane functions with its amphipathic structure. Binds to healthy erythrocytes (this binding is receptor independent), but has very weak hemolytic activity. Does not bind to P.falciparum infected erythrocytes, but accumulates within the parasite. Kills the parasite, but has no hemolytic activity on the host cell. The protein is Dermaseptin-S3 of Phyllomedusa sauvagei (Sauvage's leaf frog).